The chain runs to 223 residues: Deoxyribose-phosphate aldolase (223 aa).

The active-site Proton donor/acceptor is Asp91. The active-site Schiff-base intermediate with acetaldehyde is the Lys153. Residue Lys182 is the Proton donor/acceptor of the active site.

It belongs to the DeoC/FbaB aldolase family. DeoC type 1 subfamily.

It is found in the cytoplasm. The enzyme catalyses 2-deoxy-D-ribose 5-phosphate = D-glyceraldehyde 3-phosphate + acetaldehyde. It functions in the pathway carbohydrate degradation; 2-deoxy-D-ribose 1-phosphate degradation; D-glyceraldehyde 3-phosphate and acetaldehyde from 2-deoxy-alpha-D-ribose 1-phosphate: step 2/2. Catalyzes a reversible aldol reaction between acetaldehyde and D-glyceraldehyde 3-phosphate to generate 2-deoxy-D-ribose 5-phosphate. This chain is Deoxyribose-phosphate aldolase, found in Streptococcus pyogenes serotype M4 (strain MGAS10750).